The chain runs to 800 residues: Aldehyde dehydrogenase family 16 member A1 (800 aa).

This sequence belongs to the aldehyde dehydrogenase family. As to quaternary structure, interacts with SPG21.

In Bos taurus (Bovine), this protein is Aldehyde dehydrogenase family 16 member A1 (ALDH16A1).